A 530-amino-acid polypeptide reads, in one-letter code: Bifunctional purine biosynthesis protein PurH (530 aa).

The MGS-like domain maps to 1–148; sequence MNNARPIRRA…KNHKDVTIVV (148 aa).

Belongs to the PurH family.

It catalyses the reaction (6R)-10-formyltetrahydrofolate + 5-amino-1-(5-phospho-beta-D-ribosyl)imidazole-4-carboxamide = 5-formamido-1-(5-phospho-D-ribosyl)imidazole-4-carboxamide + (6S)-5,6,7,8-tetrahydrofolate. The catalysed reaction is IMP + H2O = 5-formamido-1-(5-phospho-D-ribosyl)imidazole-4-carboxamide. It functions in the pathway purine metabolism; IMP biosynthesis via de novo pathway; 5-formamido-1-(5-phospho-D-ribosyl)imidazole-4-carboxamide from 5-amino-1-(5-phospho-D-ribosyl)imidazole-4-carboxamide (10-formyl THF route): step 1/1. It participates in purine metabolism; IMP biosynthesis via de novo pathway; IMP from 5-formamido-1-(5-phospho-D-ribosyl)imidazole-4-carboxamide: step 1/1. The sequence is that of Bifunctional purine biosynthesis protein PurH from Aliivibrio fischeri (strain ATCC 700601 / ES114) (Vibrio fischeri).